The following is a 233-amino-acid chain: Orotidine 5'-phosphate decarboxylase (233 aa).

Residues aspartate 9, lysine 31, 58–67, threonine 120, arginine 182, glutamine 191, glycine 211, and arginine 212 contribute to the substrate site; that span reads DLKLHDIPNT. The active-site Proton donor is the lysine 60.

It belongs to the OMP decarboxylase family. Type 1 subfamily. As to quaternary structure, homodimer.

It catalyses the reaction orotidine 5'-phosphate + H(+) = UMP + CO2. It functions in the pathway pyrimidine metabolism; UMP biosynthesis via de novo pathway; UMP from orotate: step 2/2. In terms of biological role, catalyzes the decarboxylation of orotidine 5'-monophosphate (OMP) to uridine 5'-monophosphate (UMP). The sequence is that of Orotidine 5'-phosphate decarboxylase from Listeria monocytogenes serotype 4b (strain CLIP80459).